Consider the following 282-residue polypeptide: NADPH-dependent 7-cyano-7-deazaguanine reductase (282 aa).

88–90 (IES) is a substrate binding site. An NADPH-binding site is contributed by 90–91 (SK). Cysteine 190 serves as the catalytic Thioimide intermediate. The active-site Proton donor is aspartate 197. 229 to 230 (HE) contacts substrate. Residue 258-259 (RG) coordinates NADPH.

The protein belongs to the GTP cyclohydrolase I family. QueF type 2 subfamily. In terms of assembly, homodimer.

The protein localises to the cytoplasm. The catalysed reaction is 7-aminomethyl-7-carbaguanine + 2 NADP(+) = 7-cyano-7-deazaguanine + 2 NADPH + 3 H(+). It participates in tRNA modification; tRNA-queuosine biosynthesis. Functionally, catalyzes the NADPH-dependent reduction of 7-cyano-7-deazaguanine (preQ0) to 7-aminomethyl-7-deazaguanine (preQ1). The polypeptide is NADPH-dependent 7-cyano-7-deazaguanine reductase (Escherichia coli O127:H6 (strain E2348/69 / EPEC)).